The primary structure comprises 576 residues: SNF1-like protein kinase ssp2 (576 aa).

One can recognise a Protein kinase domain in the interval 34–285 (YIIRETLGEG…IQEIRRDPWF (252 aa)). ATP-binding positions include 40–48 (LGEGSFGKV) and Lys-63. The active-site Proton acceptor is the Asp-156. Thr-189 is subject to Phosphothreonine. The auto-inhibitory domain (AID) stretch occupies residues 292 to 348 (YLRPMEEVQGSYADSRIVSKLGEAMGFSEDYIVEALRSDENNEVKEAYNLLHENQVI). Positions 304–345 (ADSRIVSKLGEAMGFSEDYIVEALRSDENNEVKEAYNLLHEN) constitute a UBA domain. Phosphoserine is present on Ser-442.

The protein belongs to the protein kinase superfamily. CAMK Ser/Thr protein kinase family. SNF1 subfamily. As to quaternary structure, component of the AMP-activated protein kinase complex also known as the SNF1 kinase complex (Snf1c), a heterotrimeric complex composed of a catalytic subunit alpha and 2 regulatory subunits beta (amk2) and gamma (cbs2). Phosphorylation at Thr-189 by ssp1 is required for nuclear entry in nutritionally stressed cells.

It localises to the cytoplasm. It is found in the nucleus. It catalyses the reaction L-seryl-[protein] + ATP = O-phospho-L-seryl-[protein] + ADP + H(+). The enzyme catalyses L-threonyl-[protein] + ATP = O-phospho-L-threonyl-[protein] + ADP + H(+). Serine/threonine protein kinase essential for release from glucose repression via the phosphorylation of scr1 upon glucose deprivation. Catalytic subunit of the AMP-activated protein kinase complex also known as the SNF1 kinase complex (Snf1c), a central regulator of cellular energy homeostasis, which, in response to a fall in intracellular ATP levels, activates energy-producing pathways and inhibits energy-consuming processes. The complex phosphorylates histone H3 to form H3S10ph, which promotes H3K14ac formation, leading to transcriptional activation through TBP recruitment to the promoters. Regulates proper cell cycle exit and sexual differentiation. Also regulates ste11 levels under nitrogen deprivation. The chain is SNF1-like protein kinase ssp2 from Schizosaccharomyces pombe (strain 972 / ATCC 24843) (Fission yeast).